We begin with the raw amino-acid sequence, 81 residues long: Defensin-like protein 115 (81 aa).

The signal sequence occupies residues 1–24 (MAITKKMLVVFLLAFLFVTSSVHC). 4 cysteine pairs are disulfide-bonded: Cys-40-Cys-78, Cys-46-Cys-69, Cys-54-Cys-76, and Cys-58-Cys-77.

Belongs to the DEFL family.

It localises to the secreted. The sequence is that of Defensin-like protein 115 from Arabidopsis thaliana (Mouse-ear cress).